Reading from the N-terminus, the 154-residue chain is Protein SprT-like (154 aa).

The 139-residue stretch at 6 to 144 folds into the SprT-like domain; sequence LQQLTETISL…CGTCHGKLKF (139 aa). Histidine 67 provides a ligand contact to Zn(2+). Glutamate 68 is an active-site residue. Histidine 71 lines the Zn(2+) pocket.

This sequence belongs to the SprT family. Zn(2+) is required as a cofactor.

It is found in the cytoplasm. This Shouchella clausii (strain KSM-K16) (Alkalihalobacillus clausii) protein is Protein SprT-like.